The chain runs to 429 residues: MRKFDKSIAAFEEAQDLMPGGVNSPVRAFKSVGMNPLFMERGKGSKVYDIDGNEYIDYVLSWGPLIHGHANDRVVEALKAVAERGTSFGAPTEIENKLAKLVIERVPSIEIVRMVNSGTEATMSALRLARGYTGRNKILKFIGCYHGHGDSLLIKAGSGVATLGLPDSPGVPEGVAKNTITVAYNDLESVKYAFEQFGDDIACVIVEPVAGNMGVVPPQPGFLEGLREVTEQNGALLIFDEVMTGFRVAYNCGQGYYGVTPDLTCLGKVIGGGLPVGAYGGKAEIMRQVAPSGPIYQAGTLSGNPLAMAAGYETLVQLTPESYVEFERKAEMLEAGLRKAAEKHGIPHHINRAGSMIGIFFTDEPVINYDAAKSSNLQFFAAYYREMVEQGVFLPPSQFEGLFLSTAHSDADIEATIAAAEIAMSKLKA.

K268 carries the N6-(pyridoxal phosphate)lysine modification.

The protein belongs to the class-III pyridoxal-phosphate-dependent aminotransferase family. HemL subfamily. As to quaternary structure, homodimer. It depends on pyridoxal 5'-phosphate as a cofactor.

It localises to the cytoplasm. It carries out the reaction (S)-4-amino-5-oxopentanoate = 5-aminolevulinate. It participates in porphyrin-containing compound metabolism; protoporphyrin-IX biosynthesis; 5-aminolevulinate from L-glutamyl-tRNA(Glu): step 2/2. The sequence is that of Glutamate-1-semialdehyde 2,1-aminomutase 2 from Bacillus cereus (strain AH820).